Reading from the N-terminus, the 119-residue chain is Histone H1B, sperm (119 aa).

The H15 domain occupies 8–77 (THPPVATAVV…QNKGSFRVNK (70 aa)). Residues 76 to 119 (NKTALPKKKKAAKKPKAKKVKKPKSAAKKKTNRARAPKTKKNRN) are disordered. Residues 80–119 (LPKKKKAAKKPKAKKVKKPKSAAKKKTNRARAPKTKKNRN) show a composition bias toward basic residues.

This sequence belongs to the histone H1/H5 family.

The protein resides in the nucleus. It is found in the chromosome. Functionally, histones H1 are necessary for the condensation of nucleosome chains into higher-order structures. This is Histone H1B, sperm from Platynereis dumerilii (Dumeril's clam worm).